The primary structure comprises 354 residues: Fusarinine C esterase sidJ (354 aa).

It belongs to the sidJ hydrolase family. In terms of assembly, homodimer.

It catalyses the reaction fusarinine C + 3 H2O = 3 fusarinine + Fe(3+). Its function is as follows. Displays specific fusarinine C (FsC) esterase activity but does not hydrolyze triacetylfusarinine C (TAFC), which has the same core structure as fusarinine C. Both extra- and intracellular siderophores have been shown to be crucial for the virulence. Subsequent to chelation of iron and uptake, FsC and TAFC are hydrolyzed and the iron is transferred to the metabolism or to the intracellular siderophore ferricrocin (FC) for transport and storage of iron. The protein is Fusarinine C esterase sidJ of Aspergillus fumigatus (strain ATCC MYA-4609 / CBS 101355 / FGSC A1100 / Af293) (Neosartorya fumigata).